The primary structure comprises 222 residues: Superoxide dismutase [Cu-Zn], chloroplastic (222 aa).

The transit peptide at 1 to 68 (MAAHTILASA…AASKPLTIVA (68 aa)) directs the protein to the chloroplast. H114, H116, and H131 together coordinate Cu cation. The cysteines at positions 125 and 214 are disulfide-linked. Residues H131, H139, H148, and D151 each contribute to the Zn(2+) site. H188 contributes to the Cu cation binding site.

It belongs to the Cu-Zn superoxide dismutase family. As to quaternary structure, homotetramer. Cu cation serves as cofactor. The cofactor is Zn(2+).

Its subcellular location is the plastid. It localises to the chloroplast. It catalyses the reaction 2 superoxide + 2 H(+) = H2O2 + O2. Its function is as follows. Destroys radicals which are normally produced within the cells and which are toxic to biological systems. The polypeptide is Superoxide dismutase [Cu-Zn], chloroplastic (SODCP) (Spinacia oleracea (Spinach)).